A 281-amino-acid chain; its full sequence is Pantothenate synthetase (281 aa).

Position 31 to 38 (31 to 38 (MGALHDGH)) interacts with ATP. Histidine 38 (proton donor) is an active-site residue. Position 62 (glutamine 62) interacts with (R)-pantoate. Residue glutamine 62 coordinates beta-alanine. 148–151 (GQKD) provides a ligand contact to ATP. A (R)-pantoate-binding site is contributed by glutamine 154. ATP-binding positions include valine 177 and 185 to 188 (LSSR).

This sequence belongs to the pantothenate synthetase family. Homodimer.

It localises to the cytoplasm. The enzyme catalyses (R)-pantoate + beta-alanine + ATP = (R)-pantothenate + AMP + diphosphate + H(+). It functions in the pathway cofactor biosynthesis; (R)-pantothenate biosynthesis; (R)-pantothenate from (R)-pantoate and beta-alanine: step 1/1. Functionally, catalyzes the condensation of pantoate with beta-alanine in an ATP-dependent reaction via a pantoyl-adenylate intermediate. This chain is Pantothenate synthetase, found in Dinoroseobacter shibae (strain DSM 16493 / NCIMB 14021 / DFL 12).